Consider the following 392-residue polypeptide: DNA-directed RNA polymerase subunit Rpo1C (392 aa).

Belongs to the RNA polymerase beta' chain family. Part of the RNA polymerase complex.

Its subcellular location is the cytoplasm. It carries out the reaction RNA(n) + a ribonucleoside 5'-triphosphate = RNA(n+1) + diphosphate. DNA-dependent RNA polymerase (RNAP) catalyzes the transcription of DNA into RNA using the four ribonucleoside triphosphates as substrates. Forms part of the jaw domain. This Metallosphaera sedula (strain ATCC 51363 / DSM 5348 / JCM 9185 / NBRC 15509 / TH2) protein is DNA-directed RNA polymerase subunit Rpo1C.